Here is a 261-residue protein sequence, read N- to C-terminus: Small ribosomal subunit protein mS23 (261 aa).

The interval 233-261 is disordered; the sequence is RASSPSASWTNETEEEQKPIDQDVEEIQL.

This sequence belongs to the mitochondrion-specific ribosomal protein mS23 family. In terms of assembly, component of the mitochondrial small ribosomal subunit.

The protein localises to the mitochondrion. The chain is Small ribosomal subunit protein mS23 (RSM25) from Kluyveromyces lactis (strain ATCC 8585 / CBS 2359 / DSM 70799 / NBRC 1267 / NRRL Y-1140 / WM37) (Yeast).